The sequence spans 859 residues: DNA mismatch repair protein MutS (859 aa).

Residue 617 to 624 (GPNMGGKS) coordinates ATP. The segment at 801–820 (TSLPHEVAPQAPGKPSVPQQ) is disordered.

Belongs to the DNA mismatch repair MutS family.

Functionally, this protein is involved in the repair of mismatches in DNA. It is possible that it carries out the mismatch recognition step. This protein has a weak ATPase activity. This Pseudomonas fluorescens (strain ATCC BAA-477 / NRRL B-23932 / Pf-5) protein is DNA mismatch repair protein MutS.